The following is a 612-amino-acid chain: GPI mannosyltransferase 3 (612 aa).

A run of 2 helical transmembrane segments spans residues 92–112 (LLAI…AGLM) and 145–165 (VIYA…YFTI). Residue Asn188 is glycosylated (N-linked (GlcNAc...) asparagine). Transmembrane regions (helical) follow at residues 192-212 (IALL…RTFI), 254-274 (RPSN…NLLL), and 288-308 (ILVV…YFYN). N-linked (GlcNAc...) asparagine glycosylation occurs at Asn321. A helical transmembrane segment spans residues 339–359 (LLQSLPIMLGYSLPLFIYGLF). Asn361 carries an N-linked (GlcNAc...) asparagine glycan. Transmembrane regions (helical) follow at residues 371-391 (FGAL…YSYL), 398-418 (FIYP…LKLA), and 429-449 (EYVW…TTFQ). 3 N-linked (GlcNAc...) asparagine glycosylation sites follow: Asn508, Asn526, and Asn550.

It belongs to the glycosyltransferase 22 family. PIGB subfamily.

The protein resides in the endoplasmic reticulum membrane. Its pathway is glycolipid biosynthesis; glycosylphosphatidylinositol-anchor biosynthesis. Its function is as follows. Mannosyltransferase involved in glycosylphosphatidylinositol-anchor biosynthesis. Transfers the third mannose to Man2-GlcN-acyl-PI during GPI precursor assembly. In Candida glabrata (strain ATCC 2001 / BCRC 20586 / JCM 3761 / NBRC 0622 / NRRL Y-65 / CBS 138) (Yeast), this protein is GPI mannosyltransferase 3 (GPI10).